The sequence spans 515 residues: Ent-isokaurene C2/C3-hydroxylase (515 aa).

Residues 5–25 traverse the membrane as a helical segment; sequence LILDLCLSALFVVVLSKLVSS. Cys-452 contributes to the heme binding site.

This sequence belongs to the cytochrome P450 family. Heme is required as a cofactor.

The protein localises to the membrane. The enzyme catalyses ent-isokaurene + 2 reduced [NADPH--hemoprotein reductase] + 2 O2 = ent-isokaurene-2beta,3beta-diol + 2 oxidized [NADPH--hemoprotein reductase] + 2 H2O + 2 H(+). Enzyme of the diterpenoid metabolism involved in the biosynthesis of antibacterial oryzalides such as phytocassane. The sequence is that of Ent-isokaurene C2/C3-hydroxylase (CYP71Z6) from Oryza sativa subsp. japonica (Rice).